The sequence spans 384 residues: tRNA-specific 2-thiouridylase MnmA (384 aa).

Residues 30–37 and methionine 56 contribute to the ATP site; that span reads GMSGGVDS. The segment at 116 to 118 is interaction with target base in tRNA; that stretch reads NPD. Cysteine 121 acts as the Nucleophile in catalysis. Cysteines 121 and 218 form a disulfide. Glycine 146 contributes to the ATP binding site. The segment at 168 to 170 is interaction with tRNA; it reads KDQ. Catalysis depends on cysteine 218, which acts as the Cysteine persulfide intermediate. The interval 330-331 is interaction with tRNA; that stretch reads RY.

The protein belongs to the MnmA/TRMU family.

The protein resides in the cytoplasm. It carries out the reaction S-sulfanyl-L-cysteinyl-[protein] + uridine(34) in tRNA + AH2 + ATP = 2-thiouridine(34) in tRNA + L-cysteinyl-[protein] + A + AMP + diphosphate + H(+). In terms of biological role, catalyzes the 2-thiolation of uridine at the wobble position (U34) of tRNA, leading to the formation of s(2)U34. The protein is tRNA-specific 2-thiouridylase MnmA of Haemophilus ducreyi (strain 35000HP / ATCC 700724).